Consider the following 409-residue polypeptide: Putative lipoate-protein ligase A (409 aa).

One can recognise a BPL/LPL catalytic domain in the interval glycine 146–glycine 330. ATP is bound by residues arginine 188, glycine 193–leucine 196, and lysine 249. Position 249 (lysine 249) interacts with (R)-lipoate.

The protein belongs to the LplA family. Monomer.

The catalysed reaction is L-lysyl-[lipoyl-carrier protein] + (R)-lipoate + ATP = N(6)-[(R)-lipoyl]-L-lysyl-[lipoyl-carrier protein] + AMP + diphosphate + H(+). It participates in protein modification; protein lipoylation via exogenous pathway; protein N(6)-(lipoyl)lysine from lipoate: step 1/2. Its pathway is protein modification; protein lipoylation via exogenous pathway; protein N(6)-(lipoyl)lysine from lipoate: step 2/2. In terms of biological role, catalyzes both the ATP-dependent activation of exogenously supplied lipoate to lipoyl-AMP and the transfer of the activated lipoyl onto the lipoyl domains of lipoate-dependent enzymes. The sequence is that of Putative lipoate-protein ligase A (AIM22) from Saccharomyces cerevisiae (strain ATCC 204508 / S288c) (Baker's yeast).